We begin with the raw amino-acid sequence, 282 residues long: E3 ubiquitin-protein ligase SIAH1B (282 aa).

Polar residues predominate over residues 1–17; that stretch reads MSRQAATALSTGTSKCP. Residues 1 to 23 are disordered; that stretch reads MSRQAATALSTGTSKCPPSQRVP. Ser19 is modified (phosphoserine; by ATM and ATR). Residues 41–76 form an RING-type zinc finger; sequence CPVCFDYVLPPILQCQSGHLVCSNCRPKLTCCPTCR. Positions 90 to 282 are SBD; sequence VANSVLFPCK…LGINVTISMC (193 aa). The SIAH-type zinc finger occupies 93–153; that stretch reads SVLFPCKYSA…VMPHLMHQHK (61 aa). Zn(2+)-binding residues include Cys98, Cys105, His117, Cys121, Cys128, Cys135, His147, and His152.

Belongs to the SINA (Seven in absentia) family. As to quaternary structure, homodimer. Post-translationally, phosphorylated on Ser-19 by ATM and ATR. As to expression, widely expressed at low level in embryos and adults. Due to the high similarity between SIAH1A and SIAH1B, it is difficult to distinguish its own tissue specificity. Overexpressed in endothelial cells of adult lung.

The protein localises to the cytoplasm. Its subcellular location is the nucleus. It catalyses the reaction S-ubiquitinyl-[E2 ubiquitin-conjugating enzyme]-L-cysteine + [acceptor protein]-L-lysine = [E2 ubiquitin-conjugating enzyme]-L-cysteine + N(6)-ubiquitinyl-[acceptor protein]-L-lysine.. Its pathway is protein modification; protein ubiquitination. E3 ubiquitin-protein ligase that mediates ubiquitination and subsequent proteasomal degradation of target proteins. E3 ubiquitin ligases accept ubiquitin from an E2 ubiquitin-conjugating enzyme in the form of a thioester and then directly transfers the ubiquitin to targeted substrates. Mediates E3 ubiquitin ligase activity either through direct binding to substrates or by functioning as the essential RING domain subunit of larger E3 complexes. This Mus musculus (Mouse) protein is E3 ubiquitin-protein ligase SIAH1B (Siah1b).